The chain runs to 98 residues: NADH-ubiquinone oxidoreductase chain 4L (98 aa).

A run of 3 helical transmembrane segments spans residues 1–21 (MSLIHINILMAFTMSLVGLLM), 29–49 (ALLCLEGMVLSLFILMTLTIL), and 61–81 (IILLVFAACEAAIGLALLVMV).

This sequence belongs to the complex I subunit 4L family. In terms of assembly, core subunit of respiratory chain NADH dehydrogenase (Complex I) which is composed of 45 different subunits.

Its subcellular location is the mitochondrion inner membrane. It carries out the reaction a ubiquinone + NADH + 5 H(+)(in) = a ubiquinol + NAD(+) + 4 H(+)(out). Functionally, core subunit of the mitochondrial membrane respiratory chain NADH dehydrogenase (Complex I) which catalyzes electron transfer from NADH through the respiratory chain, using ubiquinone as an electron acceptor. Part of the enzyme membrane arm which is embedded in the lipid bilayer and involved in proton translocation. The polypeptide is NADH-ubiquinone oxidoreductase chain 4L (MT-ND4L) (Phocoena phocoena (Harbor porpoise)).